Reading from the N-terminus, the 119-residue chain is Phosphoribosyl-AMP cyclohydrolase (119 aa).

Aspartate 72 contacts Mg(2+). Cysteine 73 lines the Zn(2+) pocket. Residues aspartate 74 and aspartate 76 each coordinate Mg(2+). Zn(2+) contacts are provided by cysteine 89 and cysteine 96.

The protein belongs to the PRA-CH family. Homodimer. Mg(2+) serves as cofactor. It depends on Zn(2+) as a cofactor.

It is found in the cytoplasm. The enzyme catalyses 1-(5-phospho-beta-D-ribosyl)-5'-AMP + H2O = 1-(5-phospho-beta-D-ribosyl)-5-[(5-phospho-beta-D-ribosylamino)methylideneamino]imidazole-4-carboxamide. Its pathway is amino-acid biosynthesis; L-histidine biosynthesis; L-histidine from 5-phospho-alpha-D-ribose 1-diphosphate: step 3/9. Functionally, catalyzes the hydrolysis of the adenine ring of phosphoribosyl-AMP. The chain is Phosphoribosyl-AMP cyclohydrolase from Methanocella arvoryzae (strain DSM 22066 / NBRC 105507 / MRE50).